Consider the following 319-residue polypeptide: D-alanine--D-alanine ligase B (319 aa).

Positions 117–312 constitute an ATP-grasp domain; that stretch reads KRVWLSLGLP…FQQLVLAILA (196 aa). 143–198 serves as a coordination point for ATP; that stretch reads AQRLGFPLIVKPAHEGSSIGMAKVGGLDELIAAWREAARYDSQVLVEQWISGPEFT. Residues Asp266, Glu279, and Asn281 each coordinate Mg(2+).

This sequence belongs to the D-alanine--D-alanine ligase family. Mg(2+) is required as a cofactor. Mn(2+) serves as cofactor.

It is found in the cytoplasm. It carries out the reaction 2 D-alanine + ATP = D-alanyl-D-alanine + ADP + phosphate + H(+). It functions in the pathway cell wall biogenesis; peptidoglycan biosynthesis. Its function is as follows. Cell wall formation. In Pseudomonas aeruginosa (strain ATCC 15692 / DSM 22644 / CIP 104116 / JCM 14847 / LMG 12228 / 1C / PRS 101 / PAO1), this protein is D-alanine--D-alanine ligase B.